Reading from the N-terminus, the 994-residue chain is Receptor-like protein 6 (994 aa).

A signal peptide spans 1–25 (MTGLYSSMSFFLRTIVLLFSTSSFC). Residues 26-946 (NTFASLTQDS…SSSSSSEEDE (921 aa)) are Extracellular-facing. Asn-116, Asn-134, and Asn-154 each carry an N-linked (GlcNAc...) asparagine glycan. LRR repeat units lie at residues 122–146 (LQHL…EFSK), 148–171 (MRLE…LLQL), 174–199 (LVSL…LFLH), 205–228 (FMNL…EFSY), 230–253 (WSLR…VLLI), 254–278 (PNLE…LRNN), 280–301 (LLKL…ISNL), 302–325 (KHLT…LRSL), 326–349 (SHLS…VSNL), 350–373 (KQLT…LLNL), 375–397 (QLRY…ISQL), 398–421 (SNLE…LFNI), 423–445 (SLTT…NISL), 446–471 (LHNL…VFLS), 477–497 (SLAL…SEFS), 498–520 (SHLE…IRNQ), 521–544 (RNLS…LWRL), 546–569 (ELST…ALSG), and 571–595 (KIVM…GIQY). Asn-277 and Asn-287 each carry an N-linked (GlcNAc...) asparagine glycan. 3 N-linked (GlcNAc...) asparagine glycosylation sites follow: Asn-420, Asn-435, and Asn-442. An N-linked (GlcNAc...) asparagine glycan is attached at Asn-489. Residues Asn-522, Asn-554, and Asn-561 are each glycosylated (N-linked (GlcNAc...) asparagine). The LRR 20; degenerate repeat unit spans residues 597 to 613 (LGSYNNFTGYIPPSICG). N-linked (GlcNAc...) asparagine glycosylation occurs at Asn-602. 10 LRR repeats span residues 614 to 637 (LANP…CLEA), 639 to 663 (MSSL…FMNA), 665 to 687 (VLSS…LAGC), 689 to 710 (ALEI…WLNS), 711 to 737 (LPKL…VWFG), 739 to 762 (PLLR…YFMN), 803 to 827 (LTKY…VGIL), 828 to 851 (KELH…LANL), 852 to 875 (TNLE…LGTL), and 877 to 900 (SLEW…QFHR). A glycan (N-linked (GlcNAc...) asparagine) is linked at Asn-649. An N-linked (GlcNAc...) asparagine glycan is attached at Asn-701. Residue Asn-762 is glycosylated (N-linked (GlcNAc...) asparagine). N-linked (GlcNAc...) asparagine glycans are attached at residues Asn-834 and Asn-850. Asn-882 and Asn-902 each carry an N-linked (GlcNAc...) asparagine glycan. Residues 947 to 967 (LISWIAACLGFAPGMVFGLTM) form a helical membrane-spanning segment. Residues 968-994 (GYIMTSHKHEWFMDTFGRRKGRSTRTR) are Cytoplasmic-facing.

The protein belongs to the RLP family.

It localises to the cell membrane. In Arabidopsis thaliana (Mouse-ear cress), this protein is Receptor-like protein 6.